A 211-amino-acid polypeptide reads, in one-letter code: Large ribosomal subunit protein bL25 (211 aa).

The interval 185–211 (ESTTPAATEGEETEAAAAAPEPAAEDK) is disordered. Residues 199-211 (AAAAAPEPAAEDK) show a composition bias toward low complexity.

This sequence belongs to the bacterial ribosomal protein bL25 family. CTC subfamily. In terms of assembly, part of the 50S ribosomal subunit; part of the 5S rRNA/L5/L18/L25 subcomplex. Contacts the 5S rRNA. Binds to the 5S rRNA independently of L5 and L18.

Its function is as follows. This is one of the proteins that binds to the 5S RNA in the ribosome where it forms part of the central protuberance. This chain is Large ribosomal subunit protein bL25, found in Treponema denticola (strain ATCC 35405 / DSM 14222 / CIP 103919 / JCM 8153 / KCTC 15104).